The chain runs to 43 residues: Protein PsbN (43 aa).

Residues 7–27 form a helical membrane-spanning segment; that stretch reads IAISISGLLVSFTGYALYIAF.

Belongs to the PsbN family.

The protein localises to the plastid. It is found in the chloroplast thylakoid membrane. Its function is as follows. May play a role in photosystem I and II biogenesis. The sequence is that of Protein PsbN from Glycine max (Soybean).